The chain runs to 538 residues: Probable bifunctional tRNA threonylcarbamoyladenosine biosynthesis protein (538 aa).

The kae1 stretch occupies residues 1–327 (MIVLICLGIE…FRTDEVEAPW (327 aa)). Fe cation contacts are provided by His-111, His-115, and Tyr-132. L-threonylcarbamoyladenylate contacts are provided by residues 132 to 136 (YVSGG), Asp-164, Gly-177, Glu-181, and Asn-260. Asp-288 contributes to the Fe cation binding site. The 203-residue stretch at 336-538 (KLPDNLIAKG…EIESRGRYTH (203 aa)) folds into the Protein kinase domain. Residues 342–350 (IAKGAESDI) and Lys-363 each bind ATP. Catalysis depends on Asp-452, which acts as the Proton acceptor; for kinase activity.

This sequence in the N-terminal section; belongs to the KAE1 / TsaD family. In the C-terminal section; belongs to the protein kinase superfamily. Tyr protein kinase family. BUD32 subfamily. As to quaternary structure, component of the KEOPS complex that consists of Kae1, Bud32, Cgi121 and Pcc1; the whole complex dimerizes. Requires Fe(2+) as cofactor.

It localises to the cytoplasm. The enzyme catalyses L-seryl-[protein] + ATP = O-phospho-L-seryl-[protein] + ADP + H(+). It catalyses the reaction L-threonyl-[protein] + ATP = O-phospho-L-threonyl-[protein] + ADP + H(+). The catalysed reaction is L-threonylcarbamoyladenylate + adenosine(37) in tRNA = N(6)-L-threonylcarbamoyladenosine(37) in tRNA + AMP + H(+). In terms of biological role, required for the formation of a threonylcarbamoyl group on adenosine at position 37 (t(6)A37) in tRNAs that read codons beginning with adenine. Is a component of the KEOPS complex that is probably involved in the transfer of the threonylcarbamoyl moiety of threonylcarbamoyl-AMP (TC-AMP) to the N6 group of A37. The Kae1 domain likely plays a direct catalytic role in this reaction. The Bud32 domain probably displays kinase activity that regulates Kae1 function. The polypeptide is Probable bifunctional tRNA threonylcarbamoyladenosine biosynthesis protein (Methanobrevibacter smithii (strain ATCC 35061 / DSM 861 / OCM 144 / PS)).